We begin with the raw amino-acid sequence, 87 residues long: UPF0335 protein Avi_3695 (87 aa).

The protein belongs to the UPF0335 family.

The protein is UPF0335 protein Avi_3695 of Allorhizobium ampelinum (strain ATCC BAA-846 / DSM 112012 / S4) (Agrobacterium vitis (strain S4)).